A 127-amino-acid polypeptide reads, in one-letter code: Aspartate 1-decarboxylase (127 aa).

The Schiff-base intermediate with substrate; via pyruvic acid role is filled by Ser25. Residue Ser25 is modified to Pyruvic acid (Ser). Thr57 contacts substrate. Residue Tyr58 is the Proton donor of the active site. 73-75 (GAA) serves as a coordination point for substrate.

This sequence belongs to the PanD family. In terms of assembly, heterooctamer of four alpha and four beta subunits. The cofactor is pyruvate. Post-translationally, is synthesized initially as an inactive proenzyme, which is activated by self-cleavage at a specific serine bond to produce a beta-subunit with a hydroxyl group at its C-terminus and an alpha-subunit with a pyruvoyl group at its N-terminus.

It localises to the cytoplasm. It carries out the reaction L-aspartate + H(+) = beta-alanine + CO2. It functions in the pathway cofactor biosynthesis; (R)-pantothenate biosynthesis; beta-alanine from L-aspartate: step 1/1. Its function is as follows. Catalyzes the pyruvoyl-dependent decarboxylation of aspartate to produce beta-alanine. The protein is Aspartate 1-decarboxylase of Aliarcobacter butzleri (strain RM4018) (Arcobacter butzleri).